Reading from the N-terminus, the 828-residue chain is Calpain-A (828 aa).

The EF-hand 1 domain maps to 1–14 (MDDLRGFLRQAGQE). Positions 88-387 (LFEDPLFPAS…FDRVEICNLS (300 aa)) constitute a Calpain catalytic domain. Residues C143, H299, and N327 contribute to the active site. Residues 388–557 (PDSLTEDQQN…TQNNMEENDD (170 aa)) form a domain III region. Positions 558-577 (HVGYGGKADTITPGFPTPKP) are linker. The segment at 578-828 (IDPQKEGLRR…EEWIERTIYS (251 aa)) is domain IV. EF-hand domains follow at residues 579–614 (DPQKEGLRRLFDSIAGKDMEVDWMELKRILDHSMRD), 699–734 (FSKDVCRSMVAMLDADKSGKLGFEEFETLLSEIAKW), 729–764 (SEIAKWKAIFKVYDVENTGRVSGFQLREALNSAGYH), and 764–799 (HLNNRVLNVLGHRYGSRDGKIAFDDFIMCAVKIKTY). The Ca(2+) site is built by D712, D714, S716, K718, E723, D742, T746, R748, and Q753.

It belongs to the peptidase C2 family. Post-translationally, undergoes calcium-dependent autolytic cleavage between Lys-54 and Asn-55, which is necessary for activation of the protein. Localized to the anterior and posterior embryonic poles just after fertilization. Becomes distributed around the polar buds and just below the pole cells of the posterior pole during cleavage cycles. During these nuclear divisions anterior localization disappears. Localized to actin caps that underlie the plasma membrane, immediately above each nucleus at cleavage cycles 8 and 9. Localized to a small set of nerve, midgut and blood cells in adults.

It is found in the cytoplasm. Activated by millimolar concentrations of calcium, and by phosphatidylinositol 4,5-diphosphate, phosphatidylinositol 4-monophosphate, phosphatidylinositol and phosphatidic acid. Its function is as follows. Calcium-regulated non-lysosomal thiol-protease. Involved in the organization of the actin-related cytoskeleton during embryogenesis. In Drosophila melanogaster (Fruit fly), this protein is Calpain-A (CalpA).